The sequence spans 376 residues: Queuine tRNA-ribosyltransferase (376 aa).

The active-site Proton acceptor is aspartate 89. Substrate is bound by residues aspartate 89–phenylalanine 93, aspartate 143, glutamine 187, and glycine 214. The interval glycine 245–aspartate 251 is RNA binding. The active-site Nucleophile is aspartate 264. Positions threonine 269 to arginine 273 are RNA binding; important for wobble base 34 recognition. Cysteine 302, cysteine 304, cysteine 307, and histidine 333 together coordinate Zn(2+).

The protein belongs to the queuine tRNA-ribosyltransferase family. As to quaternary structure, homodimer. Within each dimer, one monomer is responsible for RNA recognition and catalysis, while the other monomer binds to the replacement base PreQ1. Zn(2+) is required as a cofactor.

It catalyses the reaction 7-aminomethyl-7-carbaguanine + guanosine(34) in tRNA = 7-aminomethyl-7-carbaguanosine(34) in tRNA + guanine. It participates in tRNA modification; tRNA-queuosine biosynthesis. Catalyzes the base-exchange of a guanine (G) residue with the queuine precursor 7-aminomethyl-7-deazaguanine (PreQ1) at position 34 (anticodon wobble position) in tRNAs with GU(N) anticodons (tRNA-Asp, -Asn, -His and -Tyr). Catalysis occurs through a double-displacement mechanism. The nucleophile active site attacks the C1' of nucleotide 34 to detach the guanine base from the RNA, forming a covalent enzyme-RNA intermediate. The proton acceptor active site deprotonates the incoming PreQ1, allowing a nucleophilic attack on the C1' of the ribose to form the product. After dissociation, two additional enzymatic reactions on the tRNA convert PreQ1 to queuine (Q), resulting in the hypermodified nucleoside queuosine (7-(((4,5-cis-dihydroxy-2-cyclopenten-1-yl)amino)methyl)-7-deazaguanosine). This chain is Queuine tRNA-ribosyltransferase, found in Erwinia tasmaniensis (strain DSM 17950 / CFBP 7177 / CIP 109463 / NCPPB 4357 / Et1/99).